The sequence spans 62 residues: Snaclec aspercetin subunit beta (62 aa).

Cysteine 2 and cysteine 13 are joined by a disulfide. The region spanning 9-62 (YEGHCYRVFKPPKDWADAERFCSQQAKGGHLVSIERFGREDFVSNLITKNLQRG) is the C-type lectin domain.

The protein belongs to the snaclec family. As to quaternary structure, heterodimer; disulfide-linked. Expressed by the venom gland.

The protein resides in the secreted. Its function is as follows. Snaclec that binds to von Willebrand factor (VWF) and induces its interaction with GPIbalpha (GP1BA) (via the vWF A1 domain), resulting in platelet aggregation. Intramuscular and intravenous injections in mice induce a dose-dependent drop in platelet count (thrombocytopenia). Pretreatment by intravenous injection by this protein in mice potentiates the hemorrhagic lesion in the skin provoked by the metalloproteinase BaP1 intradermally injected. This result is not observed when both BaP1 and this protein are injected simultaneously. The sequence is that of Snaclec aspercetin subunit beta from Bothrops asper (Terciopelo).